Here is a 516-residue protein sequence, read N- to C-terminus: Myocyte-specific enhancer factor 2A homolog (516 aa).

Residues 1 to 100 (MGRKKIQITR…KGLNGCESPD (100 aa)) are interaction with hdac9. The region spanning 3-57 (RKKIQITRIMDERNRQVTFTKRKFGLMKKAYELSVLCDCEIALIIFNSSNKLFQY) is the MADS-box domain. A DNA-binding region (mef2-type) is located at residues 58–86 (ASTDMDKVLLKYTEYNEPHESRTNSDIVE). The interval 318-339 (PSSKGMMPPLNTQRVTSSQGTQ) is disordered. Over residues 327 to 339 (LNTQRVTSSQGTQ) the composition is skewed to polar residues. Residue T343 is modified to Phosphothreonine; by NLK. S386 is subject to Phosphoserine; by NLK. Polar residues predominate over residues 420–433 (GSNLSINTNQNINI). The disordered stretch occupies residues 420–516 (GSNLSINTNQ…KRMRMDAWVT (97 aa)). The span at 465–475 (DSLSSSSSSYD) shows a compositional bias: low complexity. Composition is skewed to basic and acidic residues over residues 476 to 486 (GSDREDVRNDF) and 497 to 516 (NNEDRDSPSVKRMRMDAWVT).

This sequence belongs to the MEF2 family. As to quaternary structure, interacts with hdac9 and nlk2. In terms of tissue distribution, restricted to the somitic mesoderm of early embryos. Expressed in the head region of neurula stage embryos and in body muscle (myotomes) of the tadpole. Expressed in all tissues examined in the adult.

It is found in the nucleus. In terms of biological role, may regulate muscle-specific transcription in the embryo and may regulate transcription of a variety of cell types in the adult. Binds to the sequence 5'-CTA[TA]4TAR-3'. Acts downstream of nlk2 in anterior neural development, including eye formation. In Xenopus laevis (African clawed frog), this protein is Myocyte-specific enhancer factor 2A homolog (mef2a).